A 346-amino-acid polypeptide reads, in one-letter code: MQADILDGKQKRVNLNSKRLVNCNQVDVNQLVPIKYKWAWEHYLNGCANNWLPTEIPMGKDIELWKSDRLSEDERRVILLNLGFFSTAESLVGNNIVLAIFKHVTNPEARQYLLRQAFEEAVHTHTFLYICESLGLDEKEIFNAYNERAAIKAKDDFQMEITGKVLDPNFRTDSVEGLQEFVKNLVGYYIIMEGIFFYSGFVMILSFHRQNKMIGIGEQYQYILRDETIHLNFGIDLINGIKEENPEIWTPELQQEIVELIKRAVDLEIEYAQDCLPRGILGLRASMFIDYVQHIADRRLERIGLKPIYHTKNPFPWMSETIDLNKEKNFFETRVIEYQHAASLTW.

Positions 89, 120, and 123 each coordinate Fe cation. Residue Tyr-129 is part of the active site. Fe cation is bound by residues Glu-193, Glu-227, and His-230.

The protein belongs to the ribonucleoside diphosphate reductase small chain family. Tetramer of two alpha and two beta subunits. Fe cation is required as a cofactor.

It catalyses the reaction a 2'-deoxyribonucleoside 5'-diphosphate + [thioredoxin]-disulfide + H2O = a ribonucleoside 5'-diphosphate + [thioredoxin]-dithiol. Functionally, provides the precursors necessary for DNA synthesis. Catalyzes the biosynthesis of deoxyribonucleotides from the corresponding ribonucleotides. The polypeptide is Ribonucleoside-diphosphate reductase subunit beta (nrdB) (Chlamydia trachomatis serovar D (strain ATCC VR-885 / DSM 19411 / UW-3/Cx)).